Reading from the N-terminus, the 464-residue chain is D-inositol 3-phosphate glycosyltransferase (464 aa).

A compositionally biased stretch (basic and acidic residues) spans 1–20 (MEGAPRRPDRHARSEEERHV). The segment at 1–44 (MEGAPRRPDRHARSEEERHVSQYASRLGRRSPAAPTRRRMLRKP) is disordered. H53 contacts 1D-myo-inositol 3-phosphate. Residues 59–60 (QP) and G67 each bind UDP-N-acetyl-alpha-D-glucosamine. Residues 64–69 (DAGGMN), K122, Y155, T179, and R199 contribute to the 1D-myo-inositol 3-phosphate site. Residues R274, K279, and V340 each contribute to the UDP-N-acetyl-alpha-D-glucosamine site. The Mg(2+) site is built by F349, R350, and A352. Residues E362 and E370 each contribute to the UDP-N-acetyl-alpha-D-glucosamine site. Residue T376 coordinates Mg(2+).

This sequence belongs to the glycosyltransferase group 1 family. MshA subfamily. Homodimer.

The catalysed reaction is 1D-myo-inositol 3-phosphate + UDP-N-acetyl-alpha-D-glucosamine = 1D-myo-inositol 2-acetamido-2-deoxy-alpha-D-glucopyranoside 3-phosphate + UDP + H(+). Catalyzes the transfer of a N-acetyl-glucosamine moiety to 1D-myo-inositol 3-phosphate to produce 1D-myo-inositol 2-acetamido-2-deoxy-glucopyranoside 3-phosphate in the mycothiol biosynthesis pathway. The chain is D-inositol 3-phosphate glycosyltransferase from Streptomyces avermitilis (strain ATCC 31267 / DSM 46492 / JCM 5070 / NBRC 14893 / NCIMB 12804 / NRRL 8165 / MA-4680).